We begin with the raw amino-acid sequence, 433 residues long: Probable mannan endo-1,4-beta-mannosidase F (433 aa).

The first 19 residues, 1–19, serve as a signal peptide directing secretion; that stretch reads MKRQALTLIPLLGAAAAQS. A CBM1 domain is found at 20-53; it reads GPYGQCGGNDWSGATTCVSGYVCVYQNEWYSQCV. Positions 56 to 82 are thr-rich linker; the sequence is TATSSSTTLTTTTSATTRTTTTTTSTT. The tract at residues 83 to 433 is catalytic; sequence SVPSSTNFPS…TEHMERIAAR (351 aa). An N-linked (GlcNAc...) asparagine glycan is attached at Asn97. The substrate site is built by Trp142 and Asn255. The Proton donor role is filled by Glu256. Tyr331 lines the substrate pocket. The Nucleophile role is filled by Glu364. Trp394 lines the substrate pocket.

It belongs to the glycosyl hydrolase 5 (cellulase A) family.

It is found in the secreted. The enzyme catalyses Random hydrolysis of (1-&gt;4)-beta-D-mannosidic linkages in mannans, galactomannans and glucomannans.. Endo-1,4-mannanase, a crucial enzyme for depolymerization of seed galactomannans and wood galactoglucomannans. The sequence is that of Probable mannan endo-1,4-beta-mannosidase F (manF) from Emericella nidulans (strain FGSC A4 / ATCC 38163 / CBS 112.46 / NRRL 194 / M139) (Aspergillus nidulans).